Reading from the N-terminus, the 326-residue chain is Undecaprenyl-phosphate 4-deoxy-4-formamido-L-arabinose transferase (326 aa).

At 1-235 the chain is on the cytoplasmic side; the sequence is MFEIHPIKKV…TCLTTTPLRM (235 aa). The helical transmembrane segment at 236–256 threads the bilayer; the sequence is LSLLGSIIATSGFSLAILLVV. Residues 257-269 are Periplasmic-facing; sequence LRLAFGSQWSGEG. The helical transmembrane segment at 270 to 290 threads the bilayer; it reads VFMLFAVLFTFIGAQFIGMGL. Over 291 to 326 the chain is Cytoplasmic; the sequence is LGEYIGRIYNDVRARPRYFVQKVIRPASSIDIEENH.

It belongs to the glycosyltransferase 2 family.

It is found in the cell inner membrane. It carries out the reaction UDP-4-deoxy-4-formamido-beta-L-arabinose + di-trans,octa-cis-undecaprenyl phosphate = 4-deoxy-4-formamido-alpha-L-arabinopyranosyl di-trans,octa-cis-undecaprenyl phosphate + UDP. It participates in glycolipid biosynthesis; 4-amino-4-deoxy-alpha-L-arabinose undecaprenyl phosphate biosynthesis; 4-amino-4-deoxy-alpha-L-arabinose undecaprenyl phosphate from UDP-4-deoxy-4-formamido-beta-L-arabinose and undecaprenyl phosphate: step 1/2. It functions in the pathway bacterial outer membrane biogenesis; lipopolysaccharide biosynthesis. Functionally, catalyzes the transfer of 4-deoxy-4-formamido-L-arabinose from UDP to undecaprenyl phosphate. The modified arabinose is attached to lipid A and is required for resistance to polymyxin and cationic antimicrobial peptides. This chain is Undecaprenyl-phosphate 4-deoxy-4-formamido-L-arabinose transferase, found in Escherichia fergusonii (strain ATCC 35469 / DSM 13698 / CCUG 18766 / IAM 14443 / JCM 21226 / LMG 7866 / NBRC 102419 / NCTC 12128 / CDC 0568-73).